The sequence spans 324 residues: NADH-quinone oxidoreductase subunit H (324 aa).

The next 8 helical transmembrane spans lie at 11 to 31 (ILITVGKAIVILLVVVTCGAF), 81 to 101 (VIFTLAPMIAFTSMLIAFAIV), 114 to 134 (IGILFFLMMAGLAVYAVLFAG), 154 to 174 (VSYEVFIGLSLMGVVAQAGSF), 186 to 206 (LWNVIPQFFGFITFAIAGVAV), 237 to 257 (FFVGEYIGIVTVSALMVTLFF), 264 to 284 (ILPPFVWFALKTGFFMMMFIL), and 304 to 324 (VCLPITLLNLLATAAVILYNA).

It belongs to the complex I subunit 1 family. As to quaternary structure, NDH-1 is composed of 13 different subunits. Subunits NuoA, H, J, K, L, M, N constitute the membrane sector of the complex.

It localises to the cell inner membrane. The enzyme catalyses a quinone + NADH + 5 H(+)(in) = a quinol + NAD(+) + 4 H(+)(out). Functionally, NDH-1 shuttles electrons from NADH, via FMN and iron-sulfur (Fe-S) centers, to quinones in the respiratory chain. The immediate electron acceptor for the enzyme in this species is believed to be ubiquinone. Couples the redox reaction to proton translocation (for every two electrons transferred, four hydrogen ions are translocated across the cytoplasmic membrane), and thus conserves the redox energy in a proton gradient. This subunit may bind ubiquinone. The sequence is that of NADH-quinone oxidoreductase subunit H from Pectobacterium carotovorum subsp. carotovorum (strain PC1).